A 563-amino-acid polypeptide reads, in one-letter code: Arginine--tRNA ligase (563 aa).

The 'HIGH' region motif lies at 122–132 (PNIAKPISMGH).

It belongs to the class-I aminoacyl-tRNA synthetase family. Monomer.

The protein localises to the cytoplasm. The enzyme catalyses tRNA(Arg) + L-arginine + ATP = L-arginyl-tRNA(Arg) + AMP + diphosphate. This Enterococcus faecalis (strain ATCC 700802 / V583) protein is Arginine--tRNA ligase.